Reading from the N-terminus, the 418-residue chain is Serine--tRNA ligase (418 aa).

232-234 is an L-serine binding site; sequence TAE. ATP-binding positions include 263–265 and V279; that span reads RRE. E286 contacts L-serine. Residue 350–353 coordinates ATP; the sequence is EISS. Residue S385 participates in L-serine binding.

It belongs to the class-II aminoacyl-tRNA synthetase family. Type-1 seryl-tRNA synthetase subfamily. As to quaternary structure, homodimer. The tRNA molecule binds across the dimer.

It is found in the cytoplasm. It catalyses the reaction tRNA(Ser) + L-serine + ATP = L-seryl-tRNA(Ser) + AMP + diphosphate + H(+). The catalysed reaction is tRNA(Sec) + L-serine + ATP = L-seryl-tRNA(Sec) + AMP + diphosphate + H(+). It functions in the pathway aminoacyl-tRNA biosynthesis; selenocysteinyl-tRNA(Sec) biosynthesis; L-seryl-tRNA(Sec) from L-serine and tRNA(Sec): step 1/1. Functionally, catalyzes the attachment of serine to tRNA(Ser). Is also able to aminoacylate tRNA(Sec) with serine, to form the misacylated tRNA L-seryl-tRNA(Sec), which will be further converted into selenocysteinyl-tRNA(Sec). The chain is Serine--tRNA ligase from Leptospira biflexa serovar Patoc (strain Patoc 1 / Ames).